The primary structure comprises 305 residues: Mitochondrial distribution and morphology protein 12 (305 aa).

One can recognise an SMP-LTD domain in the interval 1–236 (MSVEIDWDNI…WPSWIDLDFT (236 aa)). The tract at residues 233–305 (LDFTPEDPED…RVNSNTSLEE (73 aa)) is disordered. Acidic residues predominate over residues 235-248 (FTPEDPEDPEEEGR). The segment covering 258–269 (NDGKDIEMKSGT) has biased composition (basic and acidic residues). Residues 279–305 (ESVQHVSPAVTSIDQESRVNSNTSLEE) show a composition bias toward polar residues.

It belongs to the MDM12 family. Component of the ER-mitochondria encounter structure (ERMES) or MDM complex, composed of MMM1, MDM10, MDM12 and MDM34. An MMM1 homodimer associates with one molecule of MDM12 on each side in a pairwise head-to-tail manner, and the SMP-LTD domains of MMM1 and MDM12 generate a continuous hydrophobic tunnel for phospholipid trafficking.

Its subcellular location is the mitochondrion outer membrane. The protein resides in the endoplasmic reticulum membrane. Its function is as follows. Component of the ERMES/MDM complex, which serves as a molecular tether to connect the endoplasmic reticulum (ER) and mitochondria. Components of this complex are involved in the control of mitochondrial shape and protein biogenesis, and function in nonvesicular lipid trafficking between the ER and mitochondria. MDM12 is required for the interaction of the ER-resident membrane protein MMM1 and the outer mitochondrial membrane-resident beta-barrel protein MDM10. The MDM12-MMM1 subcomplex functions in the major beta-barrel assembly pathway that is responsible for biogenesis of all mitochondrial outer membrane beta-barrel proteins, and acts in a late step after the SAM complex. The MDM10-MDM12-MMM1 subcomplex further acts in the TOM40-specific pathway after the action of the MDM12-MMM1 complex. Essential for establishing and maintaining the structure of mitochondria and maintenance of mtDNA nucleoids. This is Mitochondrial distribution and morphology protein 12 from Kluyveromyces lactis (strain ATCC 8585 / CBS 2359 / DSM 70799 / NBRC 1267 / NRRL Y-1140 / WM37) (Yeast).